The following is a 134-amino-acid chain: MENKKTIYFLCTGNSCRSQMAEAWGKQYLGDKWNVYSAGIEVHGVNPNAIKAMNEVNIDITNQTSDIIDANILNRADLVVTLCSHADSVCPSTPPDVNRVHWGFDDPAGKEWSEFQRVRDEIGERIKRFSETGE.

Residues Cys11, Cys83, and Cys90 each act as nucleophile in the active site. 2 disulfide bridges follow: Cys11-Cys83 and Cys83-Cys90.

Belongs to the low molecular weight phosphotyrosine protein phosphatase family. Thioredoxin-coupled ArsC subfamily.

Its subcellular location is the cytoplasm. It carries out the reaction arsenate + [thioredoxin]-dithiol + H(+) = arsenite + [thioredoxin]-disulfide + H2O. Catalyzes the reduction of arsenate [As(V)] to arsenite [As(III)]. The polypeptide is Arsenate reductase (Bacillus cereus (strain ZK / E33L)).